The following is a 417-amino-acid chain: Serine hydroxymethyltransferase (417 aa).

Residues Leu121 and 125–127 contribute to the (6S)-5,6,7,8-tetrahydrofolate site; that span reads GHL. An N6-(pyridoxal phosphate)lysine modification is found at Lys229. 355–357 provides a ligand contact to (6S)-5,6,7,8-tetrahydrofolate; it reads SPF.

It belongs to the SHMT family. In terms of assembly, homodimer. Pyridoxal 5'-phosphate is required as a cofactor.

Its subcellular location is the cytoplasm. It catalyses the reaction (6R)-5,10-methylene-5,6,7,8-tetrahydrofolate + glycine + H2O = (6S)-5,6,7,8-tetrahydrofolate + L-serine. The protein operates within one-carbon metabolism; tetrahydrofolate interconversion. It participates in amino-acid biosynthesis; glycine biosynthesis; glycine from L-serine: step 1/1. In terms of biological role, catalyzes the reversible interconversion of serine and glycine with tetrahydrofolate (THF) serving as the one-carbon carrier. This reaction serves as the major source of one-carbon groups required for the biosynthesis of purines, thymidylate, methionine, and other important biomolecules. Also exhibits THF-independent aldolase activity toward beta-hydroxyamino acids, producing glycine and aldehydes, via a retro-aldol mechanism. This chain is Serine hydroxymethyltransferase, found in Yersinia enterocolitica serotype O:8 / biotype 1B (strain NCTC 13174 / 8081).